The primary structure comprises 612 residues: Coagulation factor X-activating enzyme heavy chain (612 aa).

Residues 1 to 20 form the signal peptide; that stretch reads MMQVLLVTISLAVFPYQGSS. Residues 21–193 constitute a propeptide, or 194; sequence IILESGNVND…KKASQLVATS (173 aa). A Peptidase M12B domain is found at 201–395; the sequence is TFIELVIVVD…YKPKCILNPP (195 aa). Glu204 provides a ligand contact to Ca(2+). An N-linked (GlcNAc...) asparagine glycan is attached at Asn259. Residue Asp286 participates in Ca(2+) binding. 3 disulfides stabilise this stretch: Cys310–Cys390, Cys350–Cys374, and Cys352–Cys357. His335 contributes to the Zn(2+) binding site. Glu336 is a catalytic residue. Zn(2+) is bound by residues His339 and His345. Asn353 and Asn373 each carry an N-linked (GlcNAc...) asparagine glycan. Residues Cys390, Asn393, Ile405, Asn408, Glu412, Glu415, and Asp418 each contribute to the Ca(2+) site. A Disintegrin domain is found at 403-489; it reads PPICGNEIWE…ECPADGFHAN (87 aa). A disulfide bond links Cys461 and Cys481. Residues 467–469 carry the D/ECD-tripeptide motif; the sequence is ECD.

The protein belongs to the venom metalloproteinase (M12B) family. P-III subfamily. P-IIId sub-subfamily. In terms of assembly, heterotrimer; disulfide-linked. The heterotrimer consists of 1 heavy chain and 2 light chains (lectins): LC1 and LC2 (AC Q7T045 and AC Q696W1). Zn(2+) is required as a cofactor. Post-translationally, N-glycosylated. Contains 8.0% of hexoses, 2.5% of hexosamines and 2.5% of sialic acids. Expressed by the venom gland.

The protein localises to the secreted. The catalysed reaction is Specifically activates several components of the blood clotting system, including coagulation factor X, coagulation factor IX and protein C by cleavage of Arg-|-Xaa bonds. Has no action on insulin B chain.. Its activity is regulated as follows. Calcium is required for the activity of the heterotrimer. In terms of biological role, catalytic subunit of blood coagulation factor X-activating enzyme. Activates coagulation factor X (F10) by cleaving the Arg(234)-Ile(235) bond, activates coagulation factor IX (F9) by cleaving the Arg(226)-Val(227) bond and is also able to activate protein C (PROC). The chain is Coagulation factor X-activating enzyme heavy chain from Macrovipera lebetinus (Levantine viper).